Reading from the N-terminus, the 61-residue chain is Large ribosomal subunit protein uL30 (61 aa).

It belongs to the universal ribosomal protein uL30 family. In terms of assembly, part of the 50S ribosomal subunit.

This chain is Large ribosomal subunit protein uL30, found in Rhizorhabdus wittichii (strain DSM 6014 / CCUG 31198 / JCM 15750 / NBRC 105917 / EY 4224 / RW1) (Sphingomonas wittichii).